Consider the following 347-residue polypeptide: MKSISNRDKLQDLLTQYYLNTNEKMVFLNSTGEVIALNEAAEEVFADDNDYSQMTNAVCRRCEGYSNEYDIMSCENCFLEALEIGKGSFQVFIRTKDNKIQPYTASYELIDHEKGIYAFTLHNVSPQIQRQERMYQRKMMQKTISAQENERKRISRELHDGIVQELINVDVELRLLKYQQDKDELIDNSKRIEGIMSRLIDDVRNLSVELRPSSLDDLGLDAAFRSYFKQFEKNYGIHVNYHTNFSAQRFDNEIETVVYRVVQEALFNALKYAQVDIVEVSLQLNENNIIAEVSDRGVGFKRGDDPKGTGLGLFGMNERAELVNGTVNIDSQINRGTIVTLEVPITD.

[4Fe-4S] cluster contacts are provided by C59, C62, C74, and C77. One can recognise a Histidine kinase domain in the interval 153-347 (RISRELHDGI…IVTLEVPITD (195 aa)). A Phosphohistidine; by autocatalysis modification is found at H159.

[4Fe-4S] cluster serves as cofactor. Post-translationally, autophosphorylated.

It is found in the cytoplasm. It carries out the reaction ATP + protein L-histidine = ADP + protein N-phospho-L-histidine.. With respect to regulation, activated by cysteine desulfurase, Fe(2+) ions and cysteine and inhibited by oxygen and ADP. Member of the two-component regulatory system NreB/NreC involved in the control of dissimilatory nitrate/nitrite reduction in response to oxygen. NreB functions as a direct oxygen sensor histidine kinase which is autophosphorylated, in the absence of oxygen, probably at the conserved histidine residue, and transfers its phosphate group probably to a conserved aspartate residue of NreC. NreB/NreC activates the expression of the nitrate (narGHJI) and nitrite (nir) reductase operons, as well as the putative nitrate transporter gene narT. This chain is Oxygen sensor histidine kinase NreB (nreB), found in Staphylococcus carnosus (strain TM300).